The sequence spans 245 residues: Protein canopy homolog 4 (245 aa).

An N-terminal signal peptide occupies residues 1 to 27 (MCGLRFIMGPVRLEILLFILAAYGAWA). 3 disulfides stabilise this stretch: C44/C202, C47/C190, and C100/C162. Positions 207–245 (WTGKEKISDGQEEADDEEEEEEEEITKTSGNPKHDPEDL) are disordered. The stretch at 209 to 237 (GKEKISDGQEEADDEEEEEEEEITKTSGN) forms a coiled coil. Acidic residues predominate over residues 216-230 (GQEEADDEEEEEEEE).

The protein belongs to the canopy family. As to quaternary structure, interacts with TLR4. As to expression, highly expressed in lung, spleen, thymus, and uterus. Moderately expressed in kidney, stomach and placenta. Weakly expressed in brain, heart, liver, small intestine, skeletal muscle and testis.

It is found in the secreted. Its function is as follows. Plays a role in the regulation of the cell surface expression of TLR4. The protein is Protein canopy homolog 4 (Cnpy4) of Mus musculus (Mouse).